The chain runs to 595 residues: MHRYRSHTCAALRKTDVGSNVRLSGWVHRVRDHGGILFIDLRDHYGITQIVADPDSPAFKVAETVRGEWVIRVDGEVKARADDAVNTNLPTGEVEIFATEIEVLSPAKELPLPVFGEPDYPEDIRLKYRFLDLRRETLHKNIMSRTKIIAAMRRRMTEIGFNEFSTPILTASSPEGARDFLVPSRIHPGKFYALPQAPQQYKQLLMVAGFDRYFQIAPCFRDEDPRADRLPGEFYQLDLEMSFVTQEEVWETMEPVMRGIFEEFAEGKPVTKVFRRIAYDDAIRTYGSDKPDLRNPIEMQAVTDHFAGSGFKVFANMIANDAKVEVWAIPAKTGGSRAFCDRMNSWAQSEGQPGLGYIFWRKEGDKLEGAGPIAKNIGEERTEAIRKQMGLEDGDACFFVAGLPSKFYKFAGDARTRAGEELNLVDRDRFELAWIIDFPFYEWDEDNKKIDFAHNPFSMPQGGMDALENMDPLEIKAYQYDLVCNGFEIASGSIRNQLPEVMVKAFEKVGLSQQDVEERFGGLYRAFQYGAPPHGGMAAGIDRVIMLLVGAKNLREISLFPMNQQALDLLMGAPSEVSPAQLRDLHVRLAPVQKS.

Position 175 (Glu-175) interacts with L-aspartate. Positions Gln-199 to Lys-202 are aspartate. L-aspartate contacts are provided by Arg-221 and His-454. Arg-221–Glu-223 serves as a coordination point for ATP. Glu-488 contacts ATP. Arg-495 is an L-aspartate binding site. Residue Gly-540 to Arg-543 participates in ATP binding.

Belongs to the class-II aminoacyl-tRNA synthetase family. Type 1 subfamily. As to quaternary structure, homodimer.

Its subcellular location is the cytoplasm. It carries out the reaction tRNA(Asx) + L-aspartate + ATP = L-aspartyl-tRNA(Asx) + AMP + diphosphate. Functionally, aspartyl-tRNA synthetase with relaxed tRNA specificity since it is able to aspartylate not only its cognate tRNA(Asp) but also tRNA(Asn). Reaction proceeds in two steps: L-aspartate is first activated by ATP to form Asp-AMP and then transferred to the acceptor end of tRNA(Asp/Asn). This chain is Aspartate--tRNA(Asp/Asn) ligase, found in Brucella canis (strain ATCC 23365 / NCTC 10854 / RM-666).